The sequence spans 483 residues: Kynureninase 1 (483 aa).

Residues Leu147, Thr148, 175 to 178 (FPSD), Ser232, Asp261, His264, and Tyr286 each bind pyridoxal 5'-phosphate. Residue Lys287 is modified to N6-(pyridoxal phosphate)lysine. The pyridoxal 5'-phosphate site is built by Trp326 and Asn354.

The protein belongs to the kynureninase family. As to quaternary structure, homodimer. Requires pyridoxal 5'-phosphate as cofactor.

The protein localises to the cytoplasm. The catalysed reaction is L-kynurenine + H2O = anthranilate + L-alanine + H(+). The enzyme catalyses 3-hydroxy-L-kynurenine + H2O = 3-hydroxyanthranilate + L-alanine + H(+). Its pathway is amino-acid degradation; L-kynurenine degradation; L-alanine and anthranilate from L-kynurenine: step 1/1. It participates in cofactor biosynthesis; NAD(+) biosynthesis; quinolinate from L-kynurenine: step 2/3. Catalyzes the cleavage of L-kynurenine (L-Kyn) and L-3-hydroxykynurenine (L-3OHKyn) into anthranilic acid (AA) and 3-hydroxyanthranilic acid (3-OHAA), respectively. This chain is Kynureninase 1 (bna5-1), found in Aspergillus terreus (strain NIH 2624 / FGSC A1156).